The following is a 217-amino-acid chain: Large ribosomal subunit protein uL4 (217 aa).

This sequence belongs to the universal ribosomal protein uL4 family. As to quaternary structure, part of the 50S ribosomal subunit.

Functionally, one of the primary rRNA binding proteins, this protein initially binds near the 5'-end of the 23S rRNA. It is important during the early stages of 50S assembly. It makes multiple contacts with different domains of the 23S rRNA in the assembled 50S subunit and ribosome. In terms of biological role, forms part of the polypeptide exit tunnel. The sequence is that of Large ribosomal subunit protein uL4 from Koribacter versatilis (strain Ellin345).